A 180-amino-acid polypeptide reads, in one-letter code: Signal peptidase complex subunit 2 (180 aa).

The Cytoplasmic segment spans residues Met-1–Arg-45. The helical transmembrane segment at Leu-46–Ala-66 threads the bilayer. Residues Pro-67–Lys-72 lie on the Lumenal side of the membrane. A helical membrane pass occupies residues Ile-73–Gln-93. Residues Trp-94–Gln-180 lie on the Cytoplasmic side of the membrane.

Belongs to the SPCS2 family. As to quaternary structure, component of the signal peptidase complex (SPC) composed of a catalytic subunit sec-11 and three accessory subunits spcs-1, spcs-2 and spcs-3. The complex induces a local thinning of the ER membrane which is used to measure the length of the signal peptide (SP) h-region of protein substrates. This ensures the selectivity of the complex towards h-regions shorter than 18-20 amino acids.

The protein localises to the endoplasmic reticulum membrane. Component of the signal peptidase complex (SPC) which catalyzes the cleavage of N-terminal signal sequences from nascent proteins as they are translocated into the lumen of the endoplasmic reticulum. Enhances the enzymatic activity of SPC and facilitates the interactions between different components of the translocation site. This Caenorhabditis briggsae protein is Signal peptidase complex subunit 2.